Here is a 227-residue protein sequence, read N- to C-terminus: Cytidylate kinase (227 aa).

Gly12 to Thr20 contacts ATP.

The protein belongs to the cytidylate kinase family. Type 1 subfamily.

It is found in the cytoplasm. It catalyses the reaction CMP + ATP = CDP + ADP. The catalysed reaction is dCMP + ATP = dCDP + ADP. The protein is Cytidylate kinase of Xanthomonas euvesicatoria pv. vesicatoria (strain 85-10) (Xanthomonas campestris pv. vesicatoria).